Reading from the N-terminus, the 1099-residue chain is Solute carrier family 38 member 10 (1099 aa).

The next 10 helical transmembrane spans lie at 9-31, 36-58, 84-104, 123-143, 153-173, 229-249, 272-292, 323-343, 345-365, and 378-398; these read WGLV…PFCF, IVLG…MFLV, LVET…YVVI, TFRV…LSLQ, FSAM…LSSF, IFAS…FFGY, MIRV…ILPC, VLTL…PNVE, ILGF…PALI, and VVLW…LSVS. Disordered stretches follow at residues 440–679 and 720–1047; these read DSQE…EEAG and EIRQ…LAPK. Phosphoserine is present on Ser-441. Composition is skewed to basic and acidic residues over residues 441 to 454, 493 to 508, 517 to 528, 544 to 561, and 586 to 599; these read SQEK…KEVL, EAHR…KVVV, PEEKKPPPKLPD, ESEK…KRPE, and PRKE…RDLH. A phosphoserine mark is found at Ser-607 and Ser-635. Composition is skewed to basic and acidic residues over residues 653–663, 720–735, and 749–766; these read EAAEQREKNEA, EIRQ…KPKP, and GQEE…HAGE. Positions 698–734 form a coiled coil; that stretch reads VQQKRLLDQQEKLLAVIEEQHKEIRQQRQEGEEDKPK. Thr-767 carries the post-translational modification Phosphothreonine. 5 stretches are compositionally biased toward basic and acidic residues: residues 793-802, 852-894, 917-928, 957-969, and 1010-1022; these read KGQHPLEEVK, EPVH…ETGK, EDSHSKSRHSEP, KSQD…RSEG, and QKPE…RDLK. At Ser-886 the chain carries Phosphoserine.

This sequence belongs to the amino acid/polyamine transporter 2 family. Only expressed in the pituitary, adrenal gland, stomach and in the upper gastrointestinal tract.

It localises to the membrane. The enzyme catalyses L-glutamate(out) = L-glutamate(in). The catalysed reaction is L-glutamine(out) = L-glutamine(in). It carries out the reaction L-alanine(in) = L-alanine(out). It catalyses the reaction L-serine(in) = L-serine(out). The enzyme catalyses L-leucine(in) = L-leucine(out). Functionally, facilitates bidirectional transport of amino acids. May act as a glutamate sensor that regulates glutamate-glutamine cycle and mTOR signaling in the brain. The transport mechanism remains to be elucidated. The chain is Solute carrier family 38 member 10 from Rattus norvegicus (Rat).